The sequence spans 198 residues: Transmembrane protein 17 (198 aa).

An N-linked (GlcNAc...) asparagine glycan is attached at asparagine 13. 4 helical membrane passes run 47 to 67, 78 to 98, 110 to 130, and 142 to 162; these read LYFN…MLHL, FIVV…LYLG, LAGF…FLLL, and AIHI…FLTL.

The protein belongs to the TMEM17 family. Part of the tectonic-like complex (also named B9 complex).

The protein localises to the cell projection. It is found in the cilium membrane. Its function is as follows. Transmembrane component of the tectonic-like complex, a complex localized at the transition zone of primary cilia and acting as a barrier that prevents diffusion of transmembrane proteins between the cilia and plasma membranes. Required for ciliogenesis and sonic hedgehog/SHH signaling. This Mus musculus (Mouse) protein is Transmembrane protein 17 (Tmem17).